Reading from the N-terminus, the 190-residue chain is Holliday junction branch migration complex subunit RuvA (190 aa).

Residues 1–64 (MIGSLTGIIE…DNLTQLYGFL (64 aa)) form a domain I region. A domain II region spans residues 65–142 (DKQEQDYMRM…KMPIEETLII (78 aa)). Residue lysine 143 is a region of interest, flexible linker. Residues 143-190 (KEDDSLAALISLGYDKLKAFNAIQEIKANFPDDSIQEIIRKALQKLSQ) form a domain III region.

The protein belongs to the RuvA family. In terms of assembly, homotetramer. Forms an RuvA(8)-RuvB(12)-Holliday junction (HJ) complex. HJ DNA is sandwiched between 2 RuvA tetramers; dsDNA enters through RuvA and exits via RuvB. An RuvB hexamer assembles on each DNA strand where it exits the tetramer. Each RuvB hexamer is contacted by two RuvA subunits (via domain III) on 2 adjacent RuvB subunits; this complex drives branch migration. In the full resolvosome a probable DNA-RuvA(4)-RuvB(12)-RuvC(2) complex forms which resolves the HJ.

It is found in the cytoplasm. Functionally, the RuvA-RuvB-RuvC complex processes Holliday junction (HJ) DNA during genetic recombination and DNA repair, while the RuvA-RuvB complex plays an important role in the rescue of blocked DNA replication forks via replication fork reversal (RFR). RuvA specifically binds to HJ cruciform DNA, conferring on it an open structure. The RuvB hexamer acts as an ATP-dependent pump, pulling dsDNA into and through the RuvAB complex. HJ branch migration allows RuvC to scan DNA until it finds its consensus sequence, where it cleaves and resolves the cruciform DNA. The protein is Holliday junction branch migration complex subunit RuvA of Ehrlichia chaffeensis (strain ATCC CRL-10679 / Arkansas).